Consider the following 272-residue polypeptide: NH(3)-dependent NAD(+) synthetase (272 aa).

45 to 52 provides a ligand contact to ATP; sequence GISGGQDS. Asp-51 is a Mg(2+) binding site. Arg-138 provides a ligand contact to deamido-NAD(+). Thr-158 contributes to the ATP binding site. Glu-163 contributes to the Mg(2+) binding site. Residues Lys-171 and Asp-178 each contribute to the deamido-NAD(+) site. Lys-187 and Thr-209 together coordinate ATP. 258-259 serves as a coordination point for deamido-NAD(+); sequence HK.

The protein belongs to the NAD synthetase family. Homodimer.

The catalysed reaction is deamido-NAD(+) + NH4(+) + ATP = AMP + diphosphate + NAD(+) + H(+). Its pathway is cofactor biosynthesis; NAD(+) biosynthesis; NAD(+) from deamido-NAD(+) (ammonia route): step 1/1. Functionally, catalyzes the ATP-dependent amidation of deamido-NAD to form NAD. Uses ammonia as a nitrogen source. This Bacillus cereus (strain ATCC 14579 / DSM 31 / CCUG 7414 / JCM 2152 / NBRC 15305 / NCIMB 9373 / NCTC 2599 / NRRL B-3711) protein is NH(3)-dependent NAD(+) synthetase.